The sequence spans 77 residues: Small ribosomal subunit protein bS16 (77 aa).

This sequence belongs to the bacterial ribosomal protein bS16 family.

This chain is Small ribosomal subunit protein bS16, found in Wolinella succinogenes (strain ATCC 29543 / DSM 1740 / CCUG 13145 / JCM 31913 / LMG 7466 / NCTC 11488 / FDC 602W) (Vibrio succinogenes).